A 461-amino-acid chain; its full sequence is Fumarate hydratase class II (461 aa).

Substrate is bound by residues 97–99 (SGT), 127–130 (HPND), 137–139 (SSN), and threonine 185. Histidine 186 serves as the catalytic Proton donor/acceptor. The active site involves serine 316. Residues serine 317 and 322–324 (KVN) contribute to the substrate site.

This sequence belongs to the class-II fumarase/aspartase family. Fumarase subfamily. In terms of assembly, homotetramer.

It localises to the cytoplasm. It catalyses the reaction (S)-malate = fumarate + H2O. Its pathway is carbohydrate metabolism; tricarboxylic acid cycle; (S)-malate from fumarate: step 1/1. Involved in the TCA cycle. Catalyzes the stereospecific interconversion of fumarate to L-malate. The polypeptide is Fumarate hydratase class II (Staphylococcus aureus (strain Mu50 / ATCC 700699)).